The chain runs to 278 residues: Anamorsin homolog (278 aa).

The tract at residues 1–147 is N-terminal SAM-like domain; sequence MESVSHLVSN…EIGSSAALPF (147 aa). A linker region spans residues 147-191; that stretch reads FANKISLGGNSKMETAKMWTLSSQDFVDDDIDIIDENTLIEEDDF. 4 residues coordinate [2Fe-2S] cluster: Cys-204, Cys-214, Cys-217, and Cys-219. Residues 204–219 form a fe-S binding site A region; it reads CDSAKKKRKACKNCSC. The [4Fe-4S] cluster site is built by Cys-239, Cys-242, Cys-250, and Cys-253. Short sequence motifs (cx2C motif) lie at residues 239–242 and 250–253; these read CGSC and CSSC. The segment at 239–253 is fe-S binding site B; sequence CGSCYLGDAFRCSSC.

This sequence belongs to the anamorsin family. In terms of assembly, monomer. Requires [2Fe-2S] cluster as cofactor. [4Fe-4S] cluster serves as cofactor.

Its subcellular location is the cytoplasm. The protein localises to the mitochondrion intermembrane space. In terms of biological role, component of the cytosolic iron-sulfur (Fe-S) protein assembly (CIA) machinery. Required for the maturation of extramitochondrial Fe-S proteins. Part of an electron transfer chain functioning in an early step of cytosolic Fe-S biogenesis, facilitating the de novo assembly of a [4Fe-4S] cluster on the cytosolic Fe-S scaffold complex. Electrons are transferred from NADPH via a FAD- and FMN-containing diflavin oxidoreductase. Together with the diflavin oxidoreductase, also required for the assembly of the diferric tyrosyl radical cofactor of ribonucleotide reductase (RNR), probably by providing electrons for reduction during radical cofactor maturation in the catalytic small subunit. In Trichoplax adhaerens (Trichoplax reptans), this protein is Anamorsin homolog.